Reading from the N-terminus, the 311-residue chain is 4-hydroxy-tetrahydrodipicolinate synthase (311 aa).

Residue Thr51 coordinates pyruvate. Tyr140 functions as the Proton donor/acceptor in the catalytic mechanism. Residue Lys168 is the Schiff-base intermediate with substrate of the active site. Ile209 is a binding site for pyruvate.

Belongs to the DapA family. Homotetramer; dimer of dimers.

The protein resides in the cytoplasm. It catalyses the reaction L-aspartate 4-semialdehyde + pyruvate = (2S,4S)-4-hydroxy-2,3,4,5-tetrahydrodipicolinate + H2O + H(+). Its pathway is amino-acid biosynthesis; L-lysine biosynthesis via DAP pathway; (S)-tetrahydrodipicolinate from L-aspartate: step 3/4. Functionally, catalyzes the condensation of (S)-aspartate-beta-semialdehyde [(S)-ASA] and pyruvate to 4-hydroxy-tetrahydrodipicolinate (HTPA). The polypeptide is 4-hydroxy-tetrahydrodipicolinate synthase (Streptococcus pneumoniae (strain 70585)).